Reading from the N-terminus, the 165-residue chain is MNNKYNYKNLKWLWLSILIMLLDIGTKYWVKTHFWIGEVLSVLPGINCYYVCNPGLAFGLFTNASLYYRWLFVWIITLVIVAFIIALYKLIERPKCYSISYSMVIGGALGNLLDRILYGAVVDFIDVHIKNWHWPTFNVADIAICIGITIVTIRFYYDFIKNNLY.

The next 5 helical transmembrane spans lie at 10–30 (LKWL…KYWV), 42–62 (VLPG…GLFT), 71–91 (LFVW…YKLI), 105–125 (IGGA…VDFI), and 133–153 (HWPT…IVTI). Active-site residues include Asp123 and Asp141.

It belongs to the peptidase A8 family.

The protein resides in the cell inner membrane. The catalysed reaction is Release of signal peptides from bacterial membrane prolipoproteins. Hydrolyzes -Xaa-Yaa-Zaa-|-(S,diacylglyceryl)Cys-, in which Xaa is hydrophobic (preferably Leu), and Yaa (Ala or Ser) and Zaa (Gly or Ala) have small, neutral side chains.. The protein operates within protein modification; lipoprotein biosynthesis (signal peptide cleavage). This protein specifically catalyzes the removal of signal peptides from prolipoproteins. This is Lipoprotein signal peptidase from Blochmanniella pennsylvanica (strain BPEN).